We begin with the raw amino-acid sequence, 356 residues long: Probable dual-specificity RNA methyltransferase RlmN (356 aa).

E100 serves as the catalytic Proton acceptor. The region spanning 106–340 is the Radical SAM core domain; it reads TNSRLTTCVS…VSLRASRGLD (235 aa). C113 and C345 are disulfide-bonded. 3 residues coordinate [4Fe-4S] cluster: C120, C124, and C127. S-adenosyl-L-methionine-binding positions include 167–168, S197, 226–228, and N302; these read GE and SLH. C345 serves as the catalytic S-methylcysteine intermediate.

Belongs to the radical SAM superfamily. RlmN family. Requires [4Fe-4S] cluster as cofactor.

It localises to the cytoplasm. The enzyme catalyses adenosine(2503) in 23S rRNA + 2 reduced [2Fe-2S]-[ferredoxin] + 2 S-adenosyl-L-methionine = 2-methyladenosine(2503) in 23S rRNA + 5'-deoxyadenosine + L-methionine + 2 oxidized [2Fe-2S]-[ferredoxin] + S-adenosyl-L-homocysteine. The catalysed reaction is adenosine(37) in tRNA + 2 reduced [2Fe-2S]-[ferredoxin] + 2 S-adenosyl-L-methionine = 2-methyladenosine(37) in tRNA + 5'-deoxyadenosine + L-methionine + 2 oxidized [2Fe-2S]-[ferredoxin] + S-adenosyl-L-homocysteine. Its function is as follows. Specifically methylates position 2 of adenine 2503 in 23S rRNA and position 2 of adenine 37 in tRNAs. This is Probable dual-specificity RNA methyltransferase RlmN from Prochlorococcus marinus (strain MIT 9211).